Reading from the N-terminus, the 253-residue chain is Precorrin-4 C(11)-methyltransferase (253 aa).

This sequence belongs to the precorrin methyltransferase family.

The enzyme catalyses precorrin-4 + S-adenosyl-L-methionine = precorrin-5 + S-adenosyl-L-homocysteine. It participates in cofactor biosynthesis; adenosylcobalamin biosynthesis; cob(II)yrinate a,c-diamide from precorrin-2 (aerobic route): step 4/10. Functionally, catalyzes the methylation of C-11 in precorrin-4 to form precorrin-5. This Sinorhizobium sp protein is Precorrin-4 C(11)-methyltransferase (cobM).